Consider the following 2879-residue polypeptide: Peramine synthetase ppzA (2879 aa).

Residues 1-12 show a composition bias toward basic and acidic residues; it reads MTYDEGGHRNNE. Positions 1 to 52 are disordered; that stretch reads MTYDEGGHRNNEETPQDVNMSSNNEGMSTSSPTGSYGEIIGQATVSVPQEDQ. The span at 16–34 shows a compositional bias: polar residues; that stretch reads QDVNMSSNNEGMSTSSPTG. The adenylation 1 stretch occupies residues 351–747; it reads QEQCRLQPNT…VGRKDTQVKI (397 aa). In terms of domain architecture, Carrier 1 spans 882 to 958; it reads QPLSDMERLL…DLSRQSKYIE (77 aa). Ser-919 carries the post-translational modification O-(pantetheine 4'-phosphoryl)serine. The interval 997–1410 is condensation; that stretch reads DAYPCTPLQE…ITILTTEDLE (414 aa). The segment at 1433 to 1827 is adenylation 2; that stretch reads DKVQHRPNAP…LSFVRRKDTT (395 aa). The tract at residues 1958–2050 is methylation (Met) domain; that stretch reads LEIGCGSGMM…KYLVKLIQDI (93 aa). The Carrier 2 domain maps to 2370 to 2448; it reads WPTTDTGKEL…RLLLDCCCDD (79 aa). The residue at position 2407 (Ser-2407) is an O-(pantetheine 4'-phosphoryl)serine. A thiesterase (TE) domain region spans residues 2500-2817; it reads TVLLTGANGF…LEDMLQDLDD (318 aa).

Belongs to the NRP synthetase family. Requires pantetheine 4'-phosphate as cofactor.

It carries out the reaction (S)-1-pyrroline-5-carboxylate + L-arginine + S-adenosyl-L-methionine + 2 ATP = peramine + 2 AMP + S-adenosyl-L-homocysteine + 2 diphosphate + H2O + 2 H(+). Its pathway is secondary metabolite biosynthesis. In terms of biological role, nonribosomal peptide synthetase; part of the gene cluster that mediates the biosynthesis of pyrrolopyrazines, secondary metabolites showing insecticidal activity. The single multifunctional NRPS ppzA is responsible for the biosynthesis of peramine. The condensation domain of ppzA is proposed to catalyze formation of a peptide bond between 1-pyrroline-5-carboxylate and arginine. The methylation domain of ppzA would catalyze the N-methylation of the alpha-amino group of arginine. The reductase domain is proposed to be responsible for reduction of the thioester and the cyclization to form an iminium ion resulting in release from the peptide synthetase. Deprotonation of this intermediate and oxidation of the pyrroline ring would give rise to peramine. This final oxidation to give the pyrrole functionality may be spontaneous. In Epichloe species that produce only peramine, the peramine synthetase gene is not localized in a gene cluster, in contrast to Metarhizium species that contain additional pyrrolopyrazine biosynthesis genes. The 2-oxoglutarate-Fe(II) type oxidoreductase ppzC hydroxylates peramine to yield the newly identified compound 8-hydroxyperamine whereas ppzD converts L-proline into trans-4-hydroxy-L-proline, a precursor of peramine biosynthesis. In Metarhizium rileyi (strain RCEF 4871) (Nomuraea rileyi), this protein is Peramine synthetase ppzA.